The sequence spans 253 residues: Succinate dehydrogenase iron-sulfur subunit (253 aa).

The [2Fe-2S] cluster site is built by Cys-64, Cys-69, and Cys-84. The 29-residue stretch at 146 to 174 (RQWAYELSKCMTCGVCLEACPNVNSKSKF) folds into the 4Fe-4S ferredoxin-type domain. [4Fe-4S] cluster contacts are provided by Cys-155, Cys-158, and Cys-161. Residues Cys-165, Cys-212, and Cys-218 each coordinate [3Fe-4S] cluster. Cys-222 is a [4Fe-4S] cluster binding site.

It belongs to the succinate dehydrogenase/fumarate reductase iron-sulfur protein family. In B.subtilis succinate dehydrogenase forms part of an enzyme complex containing three subunits: a flavoprotein, an iron-sulfur protein and cytochrome b-558. The cofactor is [2Fe-2S] cluster. [3Fe-4S] cluster is required as a cofactor. Requires [4Fe-4S] cluster as cofactor.

It carries out the reaction a quinone + succinate = fumarate + a quinol. It participates in carbohydrate metabolism; tricarboxylic acid cycle; fumarate from succinate (bacterial route): step 1/1. The polypeptide is Succinate dehydrogenase iron-sulfur subunit (sdhB) (Bacillus subtilis (strain 168)).